A 177-amino-acid chain; its full sequence is Nucleoside triphosphate/diphosphate phosphatase (177 aa).

Catalysis depends on Arg-23, which acts as the Proton donor. Positions 87, 103, 105, 107, 120, and 123 each coordinate Mg(2+).

This sequence belongs to the Ntdp family. Mg(2+) is required as a cofactor.

The catalysed reaction is a ribonucleoside 5'-triphosphate + H2O = a ribonucleoside 5'-diphosphate + phosphate + H(+). It carries out the reaction a ribonucleoside 5'-diphosphate + H2O = a ribonucleoside 5'-phosphate + phosphate + H(+). Its function is as follows. Has nucleoside phosphatase activity towards nucleoside triphosphates and nucleoside diphosphates. This is Nucleoside triphosphate/diphosphate phosphatase from Streptococcus sanguinis (strain SK36).